The chain runs to 33 residues: Pardaxin P-5 (33 aa).

The protein belongs to the pardaxin family. As to quaternary structure, monomer. In aqueous solution exists as a tetramer.

The protein localises to the secreted. The protein resides in the target cell membrane. Functionally, exhibits unusual shark repellent and surfactant properties. Forms voltage-dependent, ion-permeable channels in membranes. At high concentration causes cell membrane lysis. This Pardachirus marmoratus (Finless sole) protein is Pardaxin P-5.